Here is a 278-residue protein sequence, read N- to C-terminus: ADP-dependent (S)-NAD(P)H-hydrate dehydratase (278 aa).

Residues 4 to 276 (DDDLVRQVIR…KAIPSWMKKL (273 aa)) form the YjeF C-terminal domain. Residues alanine 39, glycine 102, and histidine 152 each contribute to the (6S)-NADPHX site. Glycine 216 is an AMP binding site. A (6S)-NADPHX-binding site is contributed by aspartate 217.

Belongs to the NnrD/CARKD family. In terms of assembly, homotetramer. Requires Mg(2+) as cofactor.

The catalysed reaction is (6S)-NADHX + ADP = AMP + phosphate + NADH + H(+). It carries out the reaction (6S)-NADPHX + ADP = AMP + phosphate + NADPH + H(+). Functionally, catalyzes the dehydration of the S-form of NAD(P)HX at the expense of ADP, which is converted to AMP. Together with NAD(P)HX epimerase, which catalyzes the epimerization of the S- and R-forms, the enzyme allows the repair of both epimers of NAD(P)HX, a damaged form of NAD(P)H that is a result of enzymatic or heat-dependent hydration. The chain is ADP-dependent (S)-NAD(P)H-hydrate dehydratase from Streptococcus thermophilus.